The following is a 177-amino-acid chain: MIKIRLSRGGTKKRPVYKVVIADSRRARDGRFIEKVGFFNPLLPKDKKERVGLEAERIKYWLGQGAQPTTRVARILGENGIIAMPANGSNPSKAIPKKERKKEGDEAAPAAAPKAEAAPAAEAPKEEAPKAEAAPAAEAPKEEAPKAEAAPAAEAPKEEAPKAEAAPAAEAPKEEAK.

The interval Gly-80–Lys-177 is disordered. Residues Ala-107–Glu-122 show a composition bias toward low complexity.

The protein belongs to the bacterial ribosomal protein bS16 family.

The polypeptide is Small ribosomal subunit protein bS16 (Pelagibacter ubique (strain HTCC1062)).